Reading from the N-terminus, the 273-residue chain is Large ribosomal subunit protein uL2 (273 aa).

Disordered regions lie at residues 28 to 53 (KPFA…TTRH) and 221 to 273 (RGTA…RRSK). Residues 39–48 (KSGGRNNNGR) show a composition bias toward low complexity.

It belongs to the universal ribosomal protein uL2 family. In terms of assembly, part of the 50S ribosomal subunit. Forms a bridge to the 30S subunit in the 70S ribosome.

One of the primary rRNA binding proteins. Required for association of the 30S and 50S subunits to form the 70S ribosome, for tRNA binding and peptide bond formation. It has been suggested to have peptidyltransferase activity; this is somewhat controversial. Makes several contacts with the 16S rRNA in the 70S ribosome. In Klebsiella pneumoniae (strain 342), this protein is Large ribosomal subunit protein uL2.